A 463-amino-acid chain; its full sequence is Chaperone SurA (463 aa).

A signal peptide spans 1 to 25 (MTKPFSVVLASLLAITSTISPLASA). PpiC domains follow at residues 174–276 (GSKY…KLME) and 289–388 (VTEY…QRVG). 2 disordered regions span residues 329–348 (ATAK…GDLG) and 434–463 (GDRA…KPTR). The span at 439 to 452 (NNATAAPAKSADPA) shows a compositional bias: low complexity. A compositionally biased stretch (pro residues) spans 453–463 (LPAPPPAKPTR).

It localises to the periplasm. The catalysed reaction is [protein]-peptidylproline (omega=180) = [protein]-peptidylproline (omega=0). Functionally, chaperone involved in the correct folding and assembly of outer membrane proteins. Recognizes specific patterns of aromatic residues and the orientation of their side chains, which are found more frequently in integral outer membrane proteins. May act in both early periplasmic and late outer membrane-associated steps of protein maturation. This chain is Chaperone SurA, found in Xanthomonas oryzae pv. oryzae (strain KACC10331 / KXO85).